The chain runs to 142 residues: Hemoglobin subunit alpha (142 aa).

Residues 2–142 (VLSAADKGHV…VSTVLTSKYR (141 aa)) enclose the Globin domain. Residue serine 4 is modified to Phosphoserine. N6-succinyllysine is present on residues lysine 8 and lysine 12. N6-acetyllysine; alternate is present on lysine 17. Position 17 is an N6-succinyllysine; alternate (lysine 17). Position 25 is a phosphotyrosine (tyrosine 25). Serine 36 carries the post-translational modification Phosphoserine. An N6-succinyllysine modification is found at lysine 41. Serine 50 is modified (phosphoserine). Histidine 59 lines the O2 pocket. A heme b-binding site is contributed by histidine 88. Residue serine 103 is modified to Phosphoserine. Position 109 is a phosphothreonine (threonine 109). Position 125 is a phosphoserine (serine 125). Residues threonine 135 and threonine 138 each carry the phosphothreonine modification. At serine 139 the chain carries Phosphoserine.

It belongs to the globin family. Heterotetramer of two alpha chains and two beta chains. In terms of tissue distribution, red blood cells.

Its function is as follows. Involved in oxygen transport from the lung to the various peripheral tissues. In terms of biological role, hemopressin acts as an antagonist peptide of the cannabinoid receptor CNR1. Hemopressin-binding efficiently blocks cannabinoid receptor CNR1 and subsequent signaling. The sequence is that of Hemoglobin subunit alpha (HBA) from Notamacropus eugenii (Tammar wallaby).